Here is a 617-residue protein sequence, read N- to C-terminus: Dihydroxy-acid dehydratase (617 aa).

Aspartate 82 lines the Mg(2+) pocket. Cysteine 123 provides a ligand contact to [2Fe-2S] cluster. Residues aspartate 124 and lysine 125 each coordinate Mg(2+). Position 125 is an N6-carboxylysine (lysine 125). A [2Fe-2S] cluster-binding site is contributed by cysteine 197. Residue glutamate 497 coordinates Mg(2+). The Proton acceptor role is filled by serine 523.

Belongs to the IlvD/Edd family. As to quaternary structure, homodimer. Requires [2Fe-2S] cluster as cofactor. Mg(2+) is required as a cofactor.

The catalysed reaction is (2R)-2,3-dihydroxy-3-methylbutanoate = 3-methyl-2-oxobutanoate + H2O. It carries out the reaction (2R,3R)-2,3-dihydroxy-3-methylpentanoate = (S)-3-methyl-2-oxopentanoate + H2O. It functions in the pathway amino-acid biosynthesis; L-isoleucine biosynthesis; L-isoleucine from 2-oxobutanoate: step 3/4. The protein operates within amino-acid biosynthesis; L-valine biosynthesis; L-valine from pyruvate: step 3/4. Functions in the biosynthesis of branched-chain amino acids. Catalyzes the dehydration of (2R,3R)-2,3-dihydroxy-3-methylpentanoate (2,3-dihydroxy-3-methylvalerate) into 2-oxo-3-methylpentanoate (2-oxo-3-methylvalerate) and of (2R)-2,3-dihydroxy-3-methylbutanoate (2,3-dihydroxyisovalerate) into 2-oxo-3-methylbutanoate (2-oxoisovalerate), the penultimate precursor to L-isoleucine and L-valine, respectively. This is Dihydroxy-acid dehydratase from Streptomyces avermitilis (strain ATCC 31267 / DSM 46492 / JCM 5070 / NBRC 14893 / NCIMB 12804 / NRRL 8165 / MA-4680).